The primary structure comprises 300 residues: Cation-efflux pump FieF (300 aa).

Helical transmembrane passes span 12-32 (AAIA…FAWW), 39-59 (ILAA…NLLV), 82-102 (AALA…LTGI), and 114-134 (PGVG…LVSF). The Zn(2+) site is built by aspartate 45 and aspartate 49. Histidine 153 and aspartate 157 together coordinate Zn(2+). The next 2 membrane-spanning stretches (helical) occupy residues 156 to 176 (SDVM…YGWH) and 178 to 198 (ADAL…LRMG).

This sequence belongs to the cation diffusion facilitator (CDF) transporter (TC 2.A.4) family. FieF subfamily. Homodimer.

It localises to the cell inner membrane. It carries out the reaction Zn(2+)(in) + H(+)(out) = Zn(2+)(out) + H(+)(in). The enzyme catalyses Cd(2+)(in) + H(+)(out) = Cd(2+)(out) + H(+)(in). It catalyses the reaction Fe(2+)(in) + H(+)(out) = Fe(2+)(out) + H(+)(in). Divalent metal cation transporter which exports Zn(2+), Cd(2+) and possibly Fe(2+). May be involved in zinc and iron detoxification by efflux. This is Cation-efflux pump FieF from Escherichia coli O7:K1 (strain IAI39 / ExPEC).